A 319-amino-acid polypeptide reads, in one-letter code: tRNA uridine(34) hydroxylase (319 aa).

The Rhodanese domain occupies 127-221 (KQEDTVIIDA…YGKDPEVQGE (95 aa)). Cysteine 181 (cysteine persulfide intermediate) is an active-site residue.

Belongs to the TrhO family.

The enzyme catalyses uridine(34) in tRNA + AH2 + O2 = 5-hydroxyuridine(34) in tRNA + A + H2O. Catalyzes oxygen-dependent 5-hydroxyuridine (ho5U) modification at position 34 in tRNAs. In Bacillus anthracis (strain A0248), this protein is tRNA uridine(34) hydroxylase.